Here is a 314-residue protein sequence, read N- to C-terminus: Probable manganese-dependent inorganic pyrophosphatase (314 aa).

The Mn(2+) site is built by histidine 10, aspartate 14, aspartate 16, aspartate 80, histidine 102, and aspartate 154.

The protein belongs to the PPase class C family. The cofactor is Mn(2+).

It localises to the cytoplasm. The enzyme catalyses diphosphate + H2O = 2 phosphate + H(+). The polypeptide is Probable manganese-dependent inorganic pyrophosphatase (ppaC) (Lactococcus lactis subsp. lactis (strain IL1403) (Streptococcus lactis)).